The chain runs to 1401 residues: Bifunctional 3'-5' exonuclease/ATP-dependent helicase WRN (1401 aa).

The interaction with WRNIP1 stretch occupies residues 1–271 (METTSLQRKF…FPVTCRNLET (271 aa)). A KBM 1 motif is present at residues 6–18 (LQRKFPEWMSMQS). One can recognise a 3'-5' exonuclease domain in the interval 51 to 223 (YEASDCSFLS…GLIIYQKLGN (173 aa)). D76 and E78 together coordinate Zn(2+). Residue K148 forms a Glycyl lysine isopeptide (Lys-Gly) (interchain with G-Cter in SUMO2) linkage. D210 is a Zn(2+) binding site. Glycyl lysine isopeptide (Lys-Gly) (interchain with G-Cter in SUMO2) cross-links involve residues K235 and K246. Residues 401–427 (QAKEEKYNDVSHQLSEHLSPNDDENDS) form a disordered region. Residues S419, S433, and S444 each carry the phosphoserine modification. A disordered region spans residues 464–492 (GTNGRLPPEEEDGHGNEAIKEEQEEEDHL). In terms of domain architecture, Helicase ATP-binding spans 522–688 (HSVLEERRDN…ISCLNLKDPQ (167 aa)). Residue 535-542 (MATGYGKS) participates in ATP binding. The short motif at 632-635 (DEAH) is the DEAH box element. The 154-residue stretch at 713–866 (DLKPFLVRKA…KLKMMVKMEK (154 aa)) folds into the Helicase C-terminal domain. Zn(2+) is bound by residues C873, C900, C901, and C904. The segment at 952–958 (RGSNSQR) is interaction with DNA. Residues 1041 to 1106 (LLPSSNPVSP…PSPGTSSSPL (66 aa)) form a disordered region. Residues 1043-1069 (PSSNPVSPETTQHSSNQNPAGLTTKQS) show a composition bias toward polar residues. Over residues 1070 to 1081 (NLERTHSYKVPE) the composition is skewed to basic and acidic residues. At S1098 the chain carries Phosphoserine. The HRDC domain maps to 1115–1194 (LDARTGLYAR…KHFCQVTSVQ (80 aa)). Positions 1323 to 1332 (GSDSRTQPPC) are enriched in polar residues. The disordered stretch occupies residues 1323 to 1401 (GSDSRTQPPC…AKTKKKGLFS (79 aa)). The span at 1348–1358 (ESCKESKEAVT) shows a compositional bias: basic and acidic residues. S1364 carries the phosphoserine modification. The KBM 2 motif lies at 1367–1376 (SKRKLPEWFA). The segment covering 1382–1392 (SADTGSSSSMA) has biased composition (polar residues). The XLM signature appears at 1388-1401 (SSSMAKTKKKGLFS).

This sequence belongs to the helicase family. RecQ subfamily. As to quaternary structure, monomer, and homooligomer. May exist as homodimer, homotrimer, homotetramer and/or homohexamer. Homotetramer, or homohexamer, when bound to DNA. Interacts via its N-terminal domain with WRNIP1. Interacts with EXO1, PCNA and SUPV3L1. Interacts with PML (isoform PML-4). Interacts (via KBM motif) with XRCC5 and XRCC6; promoting recruitment to DNA damage sites. Interacts with RECQL5; this interaction stimulates WRN helicase activity on DNA fork duplexes. It depends on Zn(2+) as a cofactor. The cofactor is Mn(2+). Post-translationally, phosphorylated by PRKDC. In terms of tissue distribution, expressed ubiquitously in most organs at a low level, highly expressed in testis, ovary and spleen.

It is found in the nucleus. The protein resides in the nucleolus. The protein localises to the nucleoplasm. It localises to the chromosome. The catalysed reaction is Couples ATP hydrolysis with the unwinding of duplex DNA by translocating in the 3'-5' direction.. It catalyses the reaction ATP + H2O = ADP + phosphate + H(+). With respect to regulation, zinc ions stimulate the exonuclease activity. Multifunctional enzyme that has magnesium and ATP-dependent 3'-5' DNA-helicase activity. Has 3'-&gt;5' exonuclease activity on forked dsDNA. Has no nuclease activity towards single-stranded DNA or blunt-ended double-stranded DNA. Binds preferentially to DNA substrates containing alternate secondary structures, such as replication forks and Holliday junctions. May play an important role in the dissociation of joint DNA molecules that can arise as products of homologous recombination, at stalled replication forks or during DNA repair. Alleviates stalling of DNA polymerases at the site of DNA lesions. Unwinds some G-quadruplex DNA. Plays a role in the formation of DNA replication focal centers; stably associates with foci elements generating binding sites for RP-A. Plays a role in double-strand break repair after gamma-irradiation. This is Bifunctional 3'-5' exonuclease/ATP-dependent helicase WRN (Wrn) from Mus musculus (Mouse).